Consider the following 247-residue polypeptide: Ubiquinone biosynthesis O-methyltransferase (247 aa).

The S-adenosyl-L-methionine site is built by arginine 39, glycine 70, aspartate 91, and methionine 134.

The protein belongs to the methyltransferase superfamily. UbiG/COQ3 family.

It carries out the reaction a 3-demethylubiquinol + S-adenosyl-L-methionine = a ubiquinol + S-adenosyl-L-homocysteine + H(+). It catalyses the reaction a 3-(all-trans-polyprenyl)benzene-1,2-diol + S-adenosyl-L-methionine = a 2-methoxy-6-(all-trans-polyprenyl)phenol + S-adenosyl-L-homocysteine + H(+). The protein operates within cofactor biosynthesis; ubiquinone biosynthesis. In terms of biological role, O-methyltransferase that catalyzes the 2 O-methylation steps in the ubiquinone biosynthetic pathway. In Cereibacter sphaeroides (strain ATCC 17025 / ATH 2.4.3) (Rhodobacter sphaeroides), this protein is Ubiquinone biosynthesis O-methyltransferase.